Consider the following 150-residue polypeptide: Arginine repressor (150 aa).

Belongs to the ArgR family.

The protein localises to the cytoplasm. Its pathway is amino-acid biosynthesis; L-arginine biosynthesis [regulation]. Functionally, regulates arginine biosynthesis genes. In Staphylococcus haemolyticus (strain JCSC1435), this protein is Arginine repressor.